The chain runs to 184 residues: ATP synthase subunit b, chloroplastic (184 aa).

A helical membrane pass occupies residues 27 to 49 (LATNPINLSVVFGVLIFFGKGVL).

Belongs to the ATPase B chain family. As to quaternary structure, F-type ATPases have 2 components, F(1) - the catalytic core - and F(0) - the membrane proton channel. F(1) has five subunits: alpha(3), beta(3), gamma(1), delta(1), epsilon(1). F(0) has four main subunits: a(1), b(1), b'(1) and c(10-14). The alpha and beta chains form an alternating ring which encloses part of the gamma chain. F(1) is attached to F(0) by a central stalk formed by the gamma and epsilon chains, while a peripheral stalk is formed by the delta, b and b' chains.

It is found in the plastid. The protein resides in the chloroplast thylakoid membrane. Functionally, f(1)F(0) ATP synthase produces ATP from ADP in the presence of a proton or sodium gradient. F-type ATPases consist of two structural domains, F(1) containing the extramembraneous catalytic core and F(0) containing the membrane proton channel, linked together by a central stalk and a peripheral stalk. During catalysis, ATP synthesis in the catalytic domain of F(1) is coupled via a rotary mechanism of the central stalk subunits to proton translocation. In terms of biological role, component of the F(0) channel, it forms part of the peripheral stalk, linking F(1) to F(0). The polypeptide is ATP synthase subunit b, chloroplastic (Barbarea verna (Land cress)).